A 392-amino-acid chain; its full sequence is Formate-dependent phosphoribosylglycinamide formyltransferase (392 aa).

Residues 20–21 (EL) and Glu80 each bind N(1)-(5-phospho-beta-D-ribosyl)glycinamide. Residues Arg112, Lys153, 158-163 (SSGKGQ), 193-196 (EGFI), and Glu201 contribute to the ATP site. Residues 117 to 306 (RLAAETLALP…EFALHVRAIL (190 aa)) form the ATP-grasp domain. Residues Glu265 and Glu277 each contribute to the Mg(2+) site. N(1)-(5-phospho-beta-D-ribosyl)glycinamide contacts are provided by residues Asp284, Lys354, and 361 to 362 (RR).

This sequence belongs to the PurK/PurT family. Homodimer.

It carries out the reaction N(1)-(5-phospho-beta-D-ribosyl)glycinamide + formate + ATP = N(2)-formyl-N(1)-(5-phospho-beta-D-ribosyl)glycinamide + ADP + phosphate + H(+). Its pathway is purine metabolism; IMP biosynthesis via de novo pathway; N(2)-formyl-N(1)-(5-phospho-D-ribosyl)glycinamide from N(1)-(5-phospho-D-ribosyl)glycinamide (formate route): step 1/1. Its function is as follows. Involved in the de novo purine biosynthesis. Catalyzes the transfer of formate to 5-phospho-ribosyl-glycinamide (GAR), producing 5-phospho-ribosyl-N-formylglycinamide (FGAR). Formate is provided by PurU via hydrolysis of 10-formyl-tetrahydrofolate. This is Formate-dependent phosphoribosylglycinamide formyltransferase from Shewanella amazonensis (strain ATCC BAA-1098 / SB2B).